The primary structure comprises 120 residues: Large ribosomal subunit protein uL18 (120 aa).

Part of the 50S ribosomal subunit; part of the 5S rRNA/L5/L18/L25 subcomplex. Contacts the 5S and 23S rRNAs.

Functionally, this is one of the proteins that bind and probably mediate the attachment of the 5S RNA into the large ribosomal subunit, where it forms part of the central protuberance. The protein is Large ribosomal subunit protein uL18 of Rhodopseudomonas palustris (strain ATCC BAA-98 / CGA009).